We begin with the raw amino-acid sequence, 585 residues long: Proline--tRNA ligase (585 aa).

The protein belongs to the class-II aminoacyl-tRNA synthetase family. ProS type 1 subfamily. As to quaternary structure, homodimer.

It localises to the cytoplasm. The enzyme catalyses tRNA(Pro) + L-proline + ATP = L-prolyl-tRNA(Pro) + AMP + diphosphate. In terms of biological role, catalyzes the attachment of proline to tRNA(Pro) in a two-step reaction: proline is first activated by ATP to form Pro-AMP and then transferred to the acceptor end of tRNA(Pro). As ProRS can inadvertently accommodate and process non-cognate amino acids such as alanine and cysteine, to avoid such errors it has two additional distinct editing activities against alanine. One activity is designated as 'pretransfer' editing and involves the tRNA(Pro)-independent hydrolysis of activated Ala-AMP. The other activity is designated 'posttransfer' editing and involves deacylation of mischarged Ala-tRNA(Pro). The misacylated Cys-tRNA(Pro) is not edited by ProRS. The chain is Proline--tRNA ligase from Mycolicibacterium vanbaalenii (strain DSM 7251 / JCM 13017 / BCRC 16820 / KCTC 9966 / NRRL B-24157 / PYR-1) (Mycobacterium vanbaalenii).